The chain runs to 1902 residues: Plexin-B3 (1902 aa).

A signal peptide spans 1–34 (MLTDFLQAPVMAPWSPFSLHLLLLFLLLLPLTRA). Positions 35–461 (HRFSVPNASF…TAQQVDRILV (427 aa)) constitute a Sema domain. The Extracellular portion of the chain corresponds to 35 to 1245 (HRFSVPNASF…MISTFPVEAQ (1211 aa)). Residue asparagine 41 is glycosylated (N-linked (GlcNAc...) asparagine). 2 disulfides stabilise this stretch: cysteine 88-cysteine 97 and cysteine 122-cysteine 130. Asparagine 221 is a glycosylation site (N-linked (GlcNAc...) asparagine). 3 disulfides stabilise this stretch: cysteine 257–cysteine 360, cysteine 273–cysteine 305, and cysteine 323–cysteine 347. A disordered region spans residues 353 to 372 (DSPESYPCGDEHTPSPIAGR). Asparagine 416 and asparagine 469 each carry an N-linked (GlcNAc...) asparagine glycan. The PSI 1 domain maps to 463 to 515 (ACPQFPNCTTCLQARDPLCGWCILQGRCTRRAECGRAVQPNQWLWSYEDNHCL). 5 cysteine pairs are disulfide-bonded: cysteine 464–cysteine 481, cysteine 470–cysteine 514, cysteine 473–cysteine 490, cysteine 484–cysteine 496, and cysteine 551–cysteine 569. 2 consecutive PSI domains span residues 609 to 671 (DCSA…EACP) and 776 to 822 (DCAM…QLCP). N-linked (GlcNAc...) asparagine glycans are attached at residues asparagine 791, asparagine 889, asparagine 946, asparagine 1090, and asparagine 1207. 3 IPT/TIG domains span residues 824–913 (PSID…HFTY), 915–1001 (DPVL…FRYT), and 1003–1134 (NPQL…FLYQ). Residues 1246 to 1266 (VGLGMGAAMLIAAVLLLTLMY) traverse the membrane as a helical segment. Residues 1267–1902 (RHKSKQALRD…ALVEYKVTDL (636 aa)) lie on the Cytoplasmic side of the membrane.

Belongs to the plexin family. As to quaternary structure, binds MET and MST1R. Interacts with RIT2/RIN. Interacts (via cytoplasmic domain) with FSCN1 and RAC1. May form homodimers (via Sema domain). Interacts (via cytoplasmic domain) with ARHGDIA. Expressed in glioma cells (at protein level). Expressed in glioma cells and oligodendrocyte precursor cells.

Its subcellular location is the cell membrane. Receptor for SEMA5A that plays a role in axon guidance, invasive growth and cell migration. Stimulates neurite outgrowth and mediates Ca(2+)/Mg(2+)-dependent cell aggregation. In glioma cells, SEMA5A stimulation of PLXNB3 results in the disassembly of F-actin stress fibers, disruption of focal adhesions and cellular collapse as well as inhibition of cell migration and invasion through ARHGDIA-mediated inactivation of RAC1. The chain is Plexin-B3 (Plxnb3) from Rattus norvegicus (Rat).